The chain runs to 217 residues: UPF0111 protein MTH_1689 (217 aa).

It belongs to the UPF0111 family.

This is UPF0111 protein MTH_1689 from Methanothermobacter thermautotrophicus (strain ATCC 29096 / DSM 1053 / JCM 10044 / NBRC 100330 / Delta H) (Methanobacterium thermoautotrophicum).